Reading from the N-terminus, the 359-residue chain is DNA polymerase IV (359 aa).

Residues 4–184 form the UmuC domain; sequence IVHVDMDAFY…LKVNRIPGVG (181 aa). Residues aspartate 8 and aspartate 102 each contribute to the Mg(2+) site. Glutamate 103 is an active-site residue.

This sequence belongs to the DNA polymerase type-Y family. As to quaternary structure, monomer. Mg(2+) is required as a cofactor.

The protein resides in the cytoplasm. The catalysed reaction is DNA(n) + a 2'-deoxyribonucleoside 5'-triphosphate = DNA(n+1) + diphosphate. Its function is as follows. Poorly processive, error-prone DNA polymerase involved in untargeted mutagenesis. Copies undamaged DNA at stalled replication forks, which arise in vivo from mismatched or misaligned primer ends. These misaligned primers can be extended by PolIV. Exhibits no 3'-5' exonuclease (proofreading) activity. May be involved in translesional synthesis, in conjunction with the beta clamp from PolIII. This chain is DNA polymerase IV, found in Xanthomonas axonopodis pv. citri (strain 306).